An 89-amino-acid chain; its full sequence is Small ribosomal subunit protein bS20 (89 aa).

The protein belongs to the bacterial ribosomal protein bS20 family.

Functionally, binds directly to 16S ribosomal RNA. The protein is Small ribosomal subunit protein bS20 of Sulfurovum sp. (strain NBC37-1).